Here is a 395-residue protein sequence, read N- to C-terminus: Phosphoglycerate kinase (395 aa).

Residues 21–23 (DFN), Arg36, 59–62 (HLGR), Arg120, and Arg153 contribute to the substrate site. Residues Lys203, Glu325, and 351–354 (GGDS) each bind ATP.

The protein belongs to the phosphoglycerate kinase family. As to quaternary structure, monomer.

Its subcellular location is the cytoplasm. The enzyme catalyses (2R)-3-phosphoglycerate + ATP = (2R)-3-phospho-glyceroyl phosphate + ADP. Its pathway is carbohydrate degradation; glycolysis; pyruvate from D-glyceraldehyde 3-phosphate: step 2/5. The protein is Phosphoglycerate kinase of Roseiflexus castenholzii (strain DSM 13941 / HLO8).